The sequence spans 417 residues: S-inosyl-L-homocysteine hydrolase (417 aa).

The substrate site is built by Asp124 and Glu149. Position 150–152 (150–152) interacts with NAD(+); that stretch reads TTT. 2 residues coordinate substrate: Lys179 and Asp183. NAD(+)-binding positions include Asn184, 213 to 218, Glu236, Asn271, 292 to 294, and Asn339; these read GYGWCG and SGH.

It belongs to the adenosylhomocysteinase family. The cofactor is NAD(+).

It localises to the cytoplasm. It carries out the reaction S-inosyl-L-homocysteine + H2O = L-homocysteine + inosine. It participates in amino-acid biosynthesis; S-adenosyl-L-methionine biosynthesis. Catalyzes the hydrolysis of S-inosyl-L-homocysteine (SIH) to L-homocysteine (Hcy) and inosine. Likely functions in a S-adenosyl-L-methionine (SAM) recycling pathway from S-adenosyl-L-homocysteine (SAH) produced from SAM-dependent methylation reactions. Can also catalyze the reverse reaction in vitro, i.e. the synthesis of SIH from Hcy and inosine. The sequence is that of S-inosyl-L-homocysteine hydrolase from Methanothermobacter thermautotrophicus (strain ATCC 29096 / DSM 1053 / JCM 10044 / NBRC 100330 / Delta H) (Methanobacterium thermoautotrophicum).